A 964-amino-acid polypeptide reads, in one-letter code: Translation initiation factor IF-2 (964 aa).

The segment at 49–357 (QIGSAEPADD…QEFDEMQAPL (309 aa)) is disordered. Residues 62–85 (AKPAARKSQTSSKKTSKETTTAKP) show a composition bias toward low complexity. A compositionally biased stretch (pro residues) spans 86-102 (APGPKPGPGPKPTPGPR). The segment covering 103–117 (PGSSSGPKPGRSSAA) has biased composition (low complexity). Residues 159–169 (PHAPAPKPKPG) are compositionally biased toward pro residues. Composition is skewed to low complexity over residues 190–212 (GLPS…APRP) and 242–251 (GQGERMPRPG). Composition is skewed to gly residues over residues 252-261 (GSQGSRGGSG) and 284-334 (GRGG…GRGG). The span at 335–346 (GGRRGRKSRKQR) shows a compositional bias: basic residues. Residues 458–629 (ARPPVVTVMG…AIVLTADAAL (172 aa)) enclose the tr-type G domain. The interval 467–474 (GHVDHGKT) is G1. Residue 467-474 (GHVDHGKT) coordinates GTP. Residues 492-496 (GITQA) form a G2 region. A G3 region spans residues 517-520 (DTPG). Residues 517-521 (DTPGH) and 571-574 (NKID) each bind GTP. Positions 571–574 (NKID) are G4. The segment at 607-609 (SAR) is G5.

It belongs to the TRAFAC class translation factor GTPase superfamily. Classic translation factor GTPase family. IF-2 subfamily.

Its subcellular location is the cytoplasm. Its function is as follows. One of the essential components for the initiation of protein synthesis. Protects formylmethionyl-tRNA from spontaneous hydrolysis and promotes its binding to the 30S ribosomal subunits. Also involved in the hydrolysis of GTP during the formation of the 70S ribosomal complex. The chain is Translation initiation factor IF-2 from Cutibacterium acnes (strain DSM 16379 / KPA171202) (Propionibacterium acnes).